Consider the following 103-residue polypeptide: Small ribosomal subunit protein uS10 (103 aa).

Belongs to the universal ribosomal protein uS10 family. Part of the 30S ribosomal subunit.

Its function is as follows. Involved in the binding of tRNA to the ribosomes. This Shewanella halifaxensis (strain HAW-EB4) protein is Small ribosomal subunit protein uS10.